A 564-amino-acid polypeptide reads, in one-letter code: Phenylalanine--tRNA ligase beta subunit (564 aa).

One can recognise a B5 domain in the interval 286 to 362 (YFQNMLEVNV…IGMGLDSFKP (77 aa)). Mg(2+) contacts are provided by D340, D346, E349, and E350.

It belongs to the phenylalanyl-tRNA synthetase beta subunit family. Type 2 subfamily. Tetramer of two alpha and two beta subunits. It depends on Mg(2+) as a cofactor.

It localises to the cytoplasm. It carries out the reaction tRNA(Phe) + L-phenylalanine + ATP = L-phenylalanyl-tRNA(Phe) + AMP + diphosphate + H(+). This chain is Phenylalanine--tRNA ligase beta subunit, found in Borrelia turicatae (strain 91E135).